Here is a 554-residue protein sequence, read N- to C-terminus: MSSPPQAVASLTERIKTLLESNFCQIIVKGELSNVSLQPSGHLYFGIKDSQAFLNGAFFHFKSKYYDRKPKDGDAVIIHGKLAVYAPRGQYQIVAHALVYAGEGDLLQKFEETKRRLTAEGYFATEKKKPLPFAPQCIGVITSPTGAVIQDILRVLSRRARNYKILVYPVTVQGNSAAHEISKAIEVMNAENLADVLIIARGGGSIEDLWAFNEEILVKAIHASTIPIVSAVGHETDYTLCDFASDVRAPTPSAAAEIVCKSSEEQVQVFEGYLRHLLSHSRQLLTSKKQQLLPWRRFLDRAEFYTTAQQQLDSIEIAIQKGVQGKIHESKQRYDNISRWLQGDLVSRMTCRLQSLKKMLSQALSHKALSLQVRCHQLKKSLTYPRQIQQASQKLSPWRQQLDTLISRRLHYQKEEYFHKHTRLKHAHNVLEQQLRSHVQKLELLGRRLSRGCELNLQNQKIAYANVKETLATILERRYENSVARYSALKEQLHSLNPKNVLKRGYAMLFDFNENSAMISVDSLQENARVRIQLQDGEAILTVTNIEICKLIKG.

It belongs to the XseA family. In terms of assembly, heterooligomer composed of large and small subunits.

It is found in the cytoplasm. It carries out the reaction Exonucleolytic cleavage in either 5'- to 3'- or 3'- to 5'-direction to yield nucleoside 5'-phosphates.. Its function is as follows. Bidirectionally degrades single-stranded DNA into large acid-insoluble oligonucleotides, which are then degraded further into small acid-soluble oligonucleotides. The sequence is that of Exodeoxyribonuclease 7 large subunit from Chlamydia pneumoniae (Chlamydophila pneumoniae).